The chain runs to 357 residues: UDP-N-acetylglucosamine--N-acetylmuramyl-(pentapeptide) pyrophosphoryl-undecaprenol N-acetylglucosamine transferase (357 aa).

Residues 14-16, Arg168, Ser198, and Gln292 contribute to the UDP-N-acetyl-alpha-D-glucosamine site; that span reads TAG.

Belongs to the glycosyltransferase 28 family. MurG subfamily.

It localises to the cell membrane. It carries out the reaction di-trans,octa-cis-undecaprenyl diphospho-N-acetyl-alpha-D-muramoyl-L-alanyl-D-glutamyl-meso-2,6-diaminopimeloyl-D-alanyl-D-alanine + UDP-N-acetyl-alpha-D-glucosamine = di-trans,octa-cis-undecaprenyl diphospho-[N-acetyl-alpha-D-glucosaminyl-(1-&gt;4)]-N-acetyl-alpha-D-muramoyl-L-alanyl-D-glutamyl-meso-2,6-diaminopimeloyl-D-alanyl-D-alanine + UDP + H(+). It participates in cell wall biogenesis; peptidoglycan biosynthesis. Cell wall formation. Catalyzes the transfer of a GlcNAc subunit on undecaprenyl-pyrophosphoryl-MurNAc-pentapeptide (lipid intermediate I) to form undecaprenyl-pyrophosphoryl-MurNAc-(pentapeptide)GlcNAc (lipid intermediate II). The protein is UDP-N-acetylglucosamine--N-acetylmuramyl-(pentapeptide) pyrophosphoryl-undecaprenol N-acetylglucosamine transferase of Oceanobacillus iheyensis (strain DSM 14371 / CIP 107618 / JCM 11309 / KCTC 3954 / HTE831).